We begin with the raw amino-acid sequence, 102 residues long: Large ribosomal subunit protein bL28 (102 aa).

Residues 1–20 (MSRRCELTAKGPQVGHKVSH) form a disordered region.

Belongs to the bacterial ribosomal protein bL28 family.

This is Large ribosomal subunit protein bL28 from Bradyrhizobium sp. (strain ORS 278).